The following is a 308-amino-acid chain: Olfactory receptor 5K1 (308 aa).

Residues methionine 1–threonine 25 are Extracellular-facing. N-linked (GlcNAc...) asparagine glycosylation is present at asparagine 5. A helical transmembrane segment spans residues leucine 26–valine 46. The Cytoplasmic portion of the chain corresponds to alanine 47 to arginine 54. Residues leucine 55–cysteine 75 form a helical membrane-spanning segment. Residues alanine 76–valine 99 lie on the Extracellular side of the membrane. An intrachain disulfide couples cysteine 97 to cysteine 189. The helical transmembrane segment at glutamine 100 to tyrosine 120 threads the bilayer. Over aspartate 121–lysine 139 the chain is Cytoplasmic. Residues leucine 140–valine 160 traverse the membrane as a helical segment. The Extracellular portion of the chain corresponds to glycine 161–glutamate 196. Residues leucine 197–serine 217 traverse the membrane as a helical segment. At tyrosine 218–alanine 237 the chain is on the cytoplasmic side. A helical transmembrane segment spans residues phenylalanine 238 to methionine 258. Residues tyrosine 259–aspartate 271 are Extracellular-facing. A helical membrane pass occupies residues isoleucine 272–leucine 292. Residues arginine 293 to lysine 308 are Cytoplasmic-facing.

It belongs to the G-protein coupled receptor 1 family.

It is found in the cell membrane. Functionally, odorant receptor. This chain is Olfactory receptor 5K1 (OR5K1), found in Homo sapiens (Human).